Consider the following 566-residue polypeptide: MEGFDTMALPYLASPLSLGNMQGTDYLNALQGMDLPDQRSNFDSETFVSGDDLTFAHLSPQTLKRFSSGYEDSFPEMVTSFDPPPPAEPPADSSIDHNNKLLSFSMPVYPWTLLDYSFRRASISISAQLHGMFFLAESPWTTSPTENAPPQQGAELTCYRRNLFQITGSVTLPRALRYIITDTGDRIPIVAHELTVSATESVEGNSVKIISVPWKTPAANDAGKDTGNSSNTAAKVEKEPPAIPLDMLTGQDLDADYATFPIAWKRLQFRVATANNGRRKELQQHFVVRLRVVATLSTGMKTPICEVHSGPVIVRGRSPRNFQSRKDLPLSGSAAASRKNAQAAAASNNLTRTSPSLTDKAKTVVKSSSPETSSNGVPQQSPPNWALATNSTLPPPTTTTLPHSSVYSQSSPEFSRPVEAHRRTTSAIAAPINLSLLDDDSLNLSNGDSRPHTSFSNDLASKSLSVDSGRPVKMRKVSHSMPQAQSRSTSATFLNTANFQQMLPVPFTSESADVLYEYFPLGLEDWQGPVDAVYRPHVVHHTNMPQMKYITARGQSKRYFAAEDVF.

A DNA-binding region (NDT80) is located at residues 79-326 (TSFDPPPPAE…RSPRNFQSRK (248 aa)). Disordered regions lie at residues 314–422 (VRGR…EAHR) and 448–470 (DSRPHTSFSNDLASKSLSVDSGR). A compositionally biased stretch (low complexity) spans 333-349 (SAAASRKNAQAAAASNN). Composition is skewed to polar residues over residues 365–391 (VKSSSPETSSNGVPQQSPPNWALATNS), 403–413 (HSSVYSQSSPE), and 452–466 (HTSFSNDLASKSLSV).

The protein localises to the nucleus. It is found in the cytoplasm. Its function is as follows. Transcription factor that acts as a positive regulator of nonrepressible acid phosphatase activity. Is a major regulator of responses to nitrogen and carbon starvation and is essential for the expression of genes involved in vegetative incompatibility (like pin-c, het-6, and tol). Vegetative incompatibility is a non-self-recognition system ubiquitous in filamentous fungi which results in programmed cell death. The chain is Protein pacG (pacG) from Emericella nidulans (strain FGSC A4 / ATCC 38163 / CBS 112.46 / NRRL 194 / M139) (Aspergillus nidulans).